Here is a 415-residue protein sequence, read N- to C-terminus: Lipoyl synthase, mitochondrial (415 aa).

The transit peptide at 1–32 directs the protein to the mitochondrion; it reads MAVSTSHFRSLCASSRSLSRTGIVAPISCRGY. The disordered stretch occupies residues 30 to 50; sequence RGYATTEPSPSATSTTTTTTA. Residues 33-49 show a composition bias toward low complexity; that stretch reads ATTEPSPSATSTTTTTT. The [4Fe-4S] cluster site is built by Cys132, Cys137, Cys143, Cys163, Cys167, Cys170, and Ser378. A Radical SAM core domain is found at 146–367; the sequence is GSDKSAATAT…RQRALDMGFL (222 aa).

This sequence belongs to the radical SAM superfamily. Lipoyl synthase family. [4Fe-4S] cluster serves as cofactor.

Its subcellular location is the mitochondrion. The catalysed reaction is [[Fe-S] cluster scaffold protein carrying a second [4Fe-4S](2+) cluster] + N(6)-octanoyl-L-lysyl-[protein] + 2 oxidized [2Fe-2S]-[ferredoxin] + 2 S-adenosyl-L-methionine + 4 H(+) = [[Fe-S] cluster scaffold protein] + N(6)-[(R)-dihydrolipoyl]-L-lysyl-[protein] + 4 Fe(3+) + 2 hydrogen sulfide + 2 5'-deoxyadenosine + 2 L-methionine + 2 reduced [2Fe-2S]-[ferredoxin]. Its pathway is protein modification; protein lipoylation via endogenous pathway; protein N(6)-(lipoyl)lysine from octanoyl-[acyl-carrier-protein]: step 2/2. In terms of biological role, catalyzes the radical-mediated insertion of two sulfur atoms into the C-6 and C-8 positions of the octanoyl moiety bound to the lipoyl domains of lipoate-dependent enzymes, thereby converting the octanoylated domains into lipoylated derivatives. In Neosartorya fischeri (strain ATCC 1020 / DSM 3700 / CBS 544.65 / FGSC A1164 / JCM 1740 / NRRL 181 / WB 181) (Aspergillus fischerianus), this protein is Lipoyl synthase, mitochondrial.